A 201-amino-acid chain; its full sequence is Superoxide dismutase [Fe] (201 aa).

Fe cation is bound by residues His-27, His-79, Asp-161, and His-165.

The protein belongs to the iron/manganese superoxide dismutase family. As to quaternary structure, homodimer. Fe cation serves as cofactor.

It catalyses the reaction 2 superoxide + 2 H(+) = H2O2 + O2. Functionally, destroys superoxide anion radicals which are normally produced within the cells and which are toxic to biological systems. The sequence is that of Superoxide dismutase [Fe] (sodB) from Synechococcus elongatus (strain ATCC 33912 / PCC 7942 / FACHB-805) (Anacystis nidulans R2).